The primary structure comprises 271 residues: GPN-loop GTPase 3 (271 aa).

Residue 13–18 (GAGKST) participates in GTP binding. The Gly-Pro-Asn (GPN)-loop; involved in dimer interface motif lies at 70–72 (GPN). GTP is bound at residue 173 to 176 (SKLD).

The protein belongs to the GPN-loop GTPase family. In terms of assembly, heterodimers with GPN1 or GPN2. Binds to RNA polymerase II (RNAPII).

Its function is as follows. Small GTPase required for proper nuclear import of RNA polymerase II and III (RNAPII and RNAPIII). May act at an RNAP assembly step prior to nuclear import. This chain is GPN-loop GTPase 3, found in Candida glabrata (strain ATCC 2001 / BCRC 20586 / JCM 3761 / NBRC 0622 / NRRL Y-65 / CBS 138) (Yeast).